Here is a 30-residue protein sequence, read N- to C-terminus: ALTVETKKRPIGSKPXALRRVGFILNXAPY.

Belongs to the bacterial ribosomal protein bL25 family. In terms of assembly, part of the 50S ribosomal subunit; part of the 5S rRNA/L5/L18/L25 subcomplex. Contacts the 5S rRNA. Binds to the 5S rRNA independently of L5 and L18.

Functionally, this is one of the proteins that binds to the 5S RNA in the ribosome where it forms part of the central protuberance. This Anabaena variabilis protein is Large ribosomal subunit protein bL25 (rplY).